We begin with the raw amino-acid sequence, 1015 residues long: Condensin complex subunit 3 (1015 aa).

HEAT repeat units follow at residues 94 to 131, 138 to 173, 174 to 212, 238 to 275, and 276 to 313; these read GLLNYLFTFLLKSHEANSNAVRFRVCLLINKLLGSMPE, DVFDKINKAMLIRLKDKIPNVRIQAVLALSRLQDPK, DDECPVVNAYATLIENDSNPEVRRAVLSCIAPSAKTLPK, MRAMSIAQRVMLLQQGLNDRSDAVKQAMQKHLLQGWLR, and FSEGNILELLHRLDVENSSEVAVSVLNALFSITPLSEL. The residue at position 390 (Ser-390) is a Phosphoserine. HEAT repeat units lie at residues 399-436, 439-478, and 617-654; these read EFIGQQLILIIKSLDTSEEGGRKKLLAVLQEILILPTI, SLVSFLVERLLHIIIDDNKRTQIVTEIISEIRAPIVTVGV, and DFARKHFVLLLQVLQIDDVTIKISALKAIFDQLMTFGI. Ser-674 is subject to Phosphoserine. HEAT repeat units follow at residues 687–724 and 865–907; these read ATAKNVLKLLSDFLDSEVSELRTGAAEGLAKLMFSGLL and KDLL…QAEA. Thr-931 carries the post-translational modification Phosphothreonine. Over residues 941–950 the composition is skewed to polar residues; that stretch reads ASKSTQLKTN. Residues 941–994 are disordered; that stretch reads ASKSTQLKTNRGQRKVTVSARTNRRCQTAEADSESDHEVPEPESEMKMRLPRRA. 4 positions are modified to phosphoserine: Ser-973, Ser-975, Ser-1002, and Ser-1015. Positions 974–988 are enriched in basic and acidic residues; sequence ESDHEVPEPESEMKM.

Belongs to the CND3 (condensin subunit 3) family. As to quaternary structure, component of the condensin complex, which contains the SMC2 and SMC4 heterodimer, and three non SMC subunits that probably regulate the complex: NCAPH/BRRN1, NCAPD2/CAPD2 and NCAPG. Post-translationally, phosphorylated by CDK1. Its phosphorylation, as well as that of NCAPD2 and NCAPH subunits, activates the condensin complex and is required for chromosome condensation. In terms of tissue distribution, highly expressed in testis.

Its subcellular location is the nucleus. The protein resides in the cytoplasm. The protein localises to the chromosome. Its function is as follows. Regulatory subunit of the condensin complex, a complex required for conversion of interphase chromatin into mitotic-like condense chromosomes. The condensin complex probably introduces positive supercoils into relaxed DNA in the presence of type I topoisomerases and converts nicked DNA into positive knotted forms in the presence of type II topoisomerases. In Homo sapiens (Human), this protein is Condensin complex subunit 3 (NCAPG).